The chain runs to 128 residues: Fluoride-specific ion channel FluC (128 aa).

4 helical membrane passes run 8-28 (IIFI…LGLL), 38-58 (LGTL…LAFF), 71-91 (FFVT…AEVI), and 103-123 (LMLA…GVFI). Residues G78 and T81 each contribute to the Na(+) site.

This sequence belongs to the fluoride channel Fluc/FEX (TC 1.A.43) family.

Its subcellular location is the cell inner membrane. The enzyme catalyses fluoride(in) = fluoride(out). With respect to regulation, na(+) is not transported, but it plays an essential structural role and its presence is essential for fluoride channel function. Its function is as follows. Fluoride-specific ion channel. Important for reducing fluoride concentration in the cell, thus reducing its toxicity. This is Fluoride-specific ion channel FluC from Pasteurella multocida (strain Pm70).